We begin with the raw amino-acid sequence, 137 residues long: Nucleoside diphosphate kinase (137 aa).

Residues K9, F57, R85, T91, R102, and N112 each coordinate ATP. H115 functions as the Pros-phosphohistidine intermediate in the catalytic mechanism.

The protein belongs to the NDK family. As to quaternary structure, homotetramer. It depends on Mg(2+) as a cofactor.

It localises to the cytoplasm. The catalysed reaction is a 2'-deoxyribonucleoside 5'-diphosphate + ATP = a 2'-deoxyribonucleoside 5'-triphosphate + ADP. The enzyme catalyses a ribonucleoside 5'-diphosphate + ATP = a ribonucleoside 5'-triphosphate + ADP. Its function is as follows. Major role in the synthesis of nucleoside triphosphates other than ATP. The ATP gamma phosphate is transferred to the NDP beta phosphate via a ping-pong mechanism, using a phosphorylated active-site intermediate. The polypeptide is Nucleoside diphosphate kinase (Nitratiruptor sp. (strain SB155-2)).